The primary structure comprises 119 residues: MKRIAFVFSTAPHGTAAGREGLDALLATSALTDDLAVFFIADGVFQLLSGQKPDAVLARDYIATFKLLSLYDIEQCWVCAASLRERGLDPQTPFVVEATPLEADALRRELANYDVILRF.

This sequence belongs to the DsrF/TusC family. Heterohexamer, formed by a dimer of trimers. The hexameric TusBCD complex contains 2 copies each of TusB, TusC and TusD. The TusBCD complex interacts with TusE.

The protein resides in the cytoplasm. In terms of biological role, part of a sulfur-relay system required for 2-thiolation of 5-methylaminomethyl-2-thiouridine (mnm(5)s(2)U) at tRNA wobble positions. This is Protein TusC from Shigella flexneri serotype 5b (strain 8401).